Reading from the N-terminus, the 224-residue chain is Transcription factor MYB1 (224 aa).

HTH myb-type domains are found at residues 10-66 (LGRV…KPSI) and 67-117 (KRGH…YKKH). 2 consecutive DNA-binding regions (H-T-H motif) follow at residues 38–62 (WKRV…LNYL) and 90–113 (WSLI…NTHL).

It localises to the nucleus. In terms of biological role, activates DODA1 and CYP76AD1 in the betalain red pigment pathway. In Beta vulgaris (Sugar beet), this protein is Transcription factor MYB1.